Here is a 277-residue protein sequence, read N- to C-terminus: Large ribosomal subunit protein uL2 (277 aa).

Disordered regions lie at residues 1–55 and 217–277; these read MGIR…RHQG and KRPS…KKKR. The segment covering 37–55 has biased composition (basic residues); the sequence is LHSKGGRNGHGRITARHQG.

The protein belongs to the universal ribosomal protein uL2 family. Part of the 50S ribosomal subunit. Forms a bridge to the 30S subunit in the 70S ribosome.

One of the primary rRNA binding proteins. Required for association of the 30S and 50S subunits to form the 70S ribosome, for tRNA binding and peptide bond formation. It has been suggested to have peptidyltransferase activity; this is somewhat controversial. Makes several contacts with the 16S rRNA in the 70S ribosome. This is Large ribosomal subunit protein uL2 from Thermobifida fusca (strain YX).